The chain runs to 464 residues: UDP-N-acetylmuramoylalanine--D-glutamate ligase (464 aa).

ATP is bound at residue 112-118 (GTDGKTT).

It belongs to the MurCDEF family.

The protein resides in the cytoplasm. It catalyses the reaction UDP-N-acetyl-alpha-D-muramoyl-L-alanine + D-glutamate + ATP = UDP-N-acetyl-alpha-D-muramoyl-L-alanyl-D-glutamate + ADP + phosphate + H(+). It participates in cell wall biogenesis; peptidoglycan biosynthesis. Functionally, cell wall formation. Catalyzes the addition of glutamate to the nucleotide precursor UDP-N-acetylmuramoyl-L-alanine (UMA). This chain is UDP-N-acetylmuramoylalanine--D-glutamate ligase, found in Pelodictyon phaeoclathratiforme (strain DSM 5477 / BU-1).